The following is a 248-amino-acid chain: Enolase-phosphatase E1 (248 aa).

Positions 14 and 16 each coordinate Mg(2+). Substrate contacts are provided by residues 145–146 (SS) and Lys-179. Residue Asp-204 participates in Mg(2+) binding.

Belongs to the HAD-like hydrolase superfamily. MasA/MtnC family. As to quaternary structure, monomer. It depends on Mg(2+) as a cofactor.

It is found in the cytoplasm. It localises to the nucleus. It carries out the reaction 5-methylsulfanyl-2,3-dioxopentyl phosphate + H2O = 1,2-dihydroxy-5-(methylsulfanyl)pent-1-en-3-one + phosphate. It participates in amino-acid biosynthesis; L-methionine biosynthesis via salvage pathway; L-methionine from S-methyl-5-thio-alpha-D-ribose 1-phosphate: step 3/6. It functions in the pathway amino-acid biosynthesis; L-methionine biosynthesis via salvage pathway; L-methionine from S-methyl-5-thio-alpha-D-ribose 1-phosphate: step 4/6. Functionally, bifunctional enzyme that catalyzes the enolization of 2,3-diketo-5-methylthiopentyl-1-phosphate (DK-MTP-1-P) into the intermediate 2-hydroxy-3-keto-5-methylthiopentenyl-1-phosphate (HK-MTPenyl-1-P), which is then dephosphorylated to form the acireductone 1,2-dihydroxy-3-keto-5-methylthiopentene (DHK-MTPene). The chain is Enolase-phosphatase E1 from Caenorhabditis elegans.